The following is a 3130-amino-acid chain: DNA polymerase zeta catalytic subunit (3130 aa).

Disordered regions lie at residues 263–295 (AIWEDEKQRRRNRNETSQMSQPESQDHRFVPAT), 425–457 (GYRGERNRMPSPCRSFGNNKYPQNSDDEENEPQ), 487–510 (LCRNTHRSSTEDDDSSSGEEMEWS), 524–548 (LDGTADENSDNPLNNENSRTHSSVI), 697–728 (PNENTLGKNSFNFSDLNHSKNKVSSEGNEKGN), and 817–871 (VTYK…EKDN). The span at 286–295 (SQDHRFVPAT) shows a compositional bias: basic and acidic residues. The segment covering 497–509 (EDDDSSSGEEMEW) has biased composition (acidic residues). 2 stretches are compositionally biased toward polar residues: residues 533-548 (DNPLNNENSRTHSSVI) and 699-728 (ENTLGKNSFNFSDLNHSKNKVSSEGNEKGN). Over residues 828-838 (SRLKLNKRKLA) the composition is skewed to basic residues. Positions 842–854 (ETSTKSSETGSTK) are enriched in low complexity. The span at 855–866 (DNFIQNNPCNSN) shows a compositional bias: polar residues. Ser-1030 is modified (phosphoserine). Disordered regions lie at residues 1035 to 1095 (YPIY…YNAE), 1162 to 1231 (SRIG…DEKI), and 1537 to 1600 (RQQK…KLLK). Thr-1041 is subject to Phosphothreonine. Basic residues-rich tracts occupy residues 1043-1061 (KKSHRRKSKHKSAKKKTGK) and 1166-1179 (KTSRARAQIKKSKA). A compositionally biased stretch (basic and acidic residues) spans 1213 to 1231 (KTNEKGTSRKHTTLKDEKI). A compositionally biased stretch (polar residues) spans 1540–1565 (KAQNANTTQDPLSNKHQPNKNISGSL). Basic residues predominate over residues 1570-1589 (ANKRTRSVTSPRKPRTPRST). Residues 1590–1600 (KQKEKIPKLLK) are compositionally biased toward basic and acidic residues. Ser-1724 bears the Phosphoserine mark. Disordered stretches follow at residues 1845–1882 (NDMLTPTPDSSPRSTSSPSQSKNGSFTPRTANILKPLM), 1962–1984 (NPRPGSPLRSGQGVVNKGSSNSP), 2017–2050 (ERSKKLPKTKPTGVVKSAENFSSSVNPDDKPVVP), 2080–2150 (PTTG…SPVE), and 2216–2236 (APGLSPLSTEPKTQKLSNKKG). Residues 1847–1898 (MLTPTPDSSPRSTSSPSQSKNGSFTPRTANILKPLMSPPSREEIMATLLDHD) are mediates interaction with MAD2L2. A compositionally biased stretch (low complexity) spans 1849–1865 (TPTPDSSPRSTSSPSQS). Ser-1967 is subject to Phosphoserine. The span at 2080-2092 (PTTGCSQTASESQ) shows a compositional bias: polar residues. The span at 2113 to 2122 (YYISYSSPDS) shows a compositional bias: low complexity. The segment covering 2221 to 2236 (PLSTEPKTQKLSNKKG) has biased composition (polar residues). Residues Cys-3042, Cys-3045, Cys-3054, and Cys-3057 each coordinate Zn(2+). The segment at 3042–3057 (CPVCDDLTQHGICSKC) adopts a CysA-type zinc-finger fold. Positions 3086, 3089, 3099, and 3104 each coordinate [4Fe-4S] cluster. Residues 3086–3104 (CKNCTGCFDRHIPCVSLNC) carry the CysB motif motif.

Belongs to the DNA polymerase type-B family. In terms of assembly, heterodimer with MAD2L2. This dimer forms the minimal DNA polymerase zeta complex (Pol-zeta2), with REV3L bearing DNA polymerase catalytic activity, although its activity is very low in this context. Component of the tetrameric Pol-zeta complex (Pol-zeta4), which consists of REV3L, MAD2L2, POLD2 and POLD3; Pol-zeta4 is the fully active form of DNA polymerase zeta. The cofactor is [4Fe-4S] cluster. In terms of tissue distribution, ubiquitously expressed.

It is found in the nucleus. It carries out the reaction DNA(n) + a 2'-deoxyribonucleoside 5'-triphosphate = DNA(n+1) + diphosphate. In terms of biological role, catalytic subunit of the DNA polymerase zeta complex, an error-prone polymerase specialized in translesion DNA synthesis (TLS). Lacks an intrinsic 3'-5' exonuclease activity and thus has no proofreading function. The chain is DNA polymerase zeta catalytic subunit (REV3L) from Homo sapiens (Human).